The primary structure comprises 359 residues: Type-1 angiotensin II receptor (359 aa).

Topologically, residues 1 to 25 (MILNSSTEDGIKRIQDDCPKAGRHN) are extracellular. A glycan (N-linked (GlcNAc...) asparagine) is linked at asparagine 4. Residues glutamine 15 and aspartate 17 each coordinate angiotensin II. Disulfide bonds link cysteine 18–cysteine 274 and cysteine 101–cysteine 180. A helical membrane pass occupies residues 26–55 (YIFVMIPTLYSIIFVVGIFGNSLVVIVIYF). Residues 56–61 (YMKLKT) are Cytoplasmic-facing. Residues 62-89 (VASVFLLNLALADLCFLLTLPLWAVYTA) form a helical membrane-spanning segment. Over 90–98 (MEYRWPFGN) the chain is Extracellular. The helical transmembrane segment at 99–125 (YLCKIASASVSFNLYASVFLLTCLSID) threads the bilayer. Residues 126–141 (RYVAIVHPMKSPVRRT) lie on the Cytoplasmic side of the membrane. The helical transmembrane segment at 142-165 (MLMAKVTCIIIWLLAGLASLPTII) threads the bilayer. The Extracellular segment spans residues 166–190 (HRNVFFIENTNITVCAFHYESQNST). Residue arginine 167 coordinates angiotensin II. An N-linked (GlcNAc...) asparagine glycan is attached at asparagine 176. Angiotensin II-binding residues include phenylalanine 182, histidine 183, and tyrosine 184. Asparagine 188 carries N-linked (GlcNAc...) asparagine glycosylation. A helical transmembrane segment spans residues 191-216 (LPIGLGLTKNILGFLFPFLIILTSYT). Residue lysine 199 participates in angiotensin II binding. Residues 217–239 (LIWKTLKRAYEIQKNKPRNDDIF) lie on the Cytoplasmic side of the membrane. Residues 240–268 (KIIMAIVLFFFFSWVPHQIFTFLDVLIQL) traverse the membrane as a helical segment. The Extracellular portion of the chain corresponds to 269-278 (GIIHDCKIAD). The helical transmembrane segment at 279–304 (IVDTAMPITICIAYFNNCLNPLFYGF) threads the bilayer. The Cytoplasmic segment spans residues 305–359 (LGKKFKKYFLQLLKYIPPKAKSHSSLSTKMSTLSYRPSDHGNASTKKSASCVEVE). The span at 335 to 352 (STLSYRPSDHGNASTKKS) shows a compositional bias: polar residues. The segment at 335–359 (STLSYRPSDHGNASTKKSASCVEVE) is disordered. Residue cysteine 355 is the site of S-palmitoyl cysteine attachment.

This sequence belongs to the G-protein coupled receptor 1 family. Interacts with MAS1. Interacts with ARRB1. Interacts with FLNA (via filamin repeat 21); increases PKA-mediated phosphorylation of FLNA. In terms of processing, C-terminal Ser or Thr residues may be phosphorylated. As to expression, adrenal, liver, aorta, kidney, lung, testis and heart.

The protein localises to the cell membrane. In terms of biological role, receptor for angiotensin II, a vasoconstricting peptide, which acts as a key regulator of blood pressure and sodium retention by the kidney. The activated receptor in turn couples to G-alpha proteins G(q) (GNAQ, GNA11, GNA14 or GNA15) and thus activates phospholipase C and increases the cytosolic Ca(2+) concentrations, which in turn triggers cellular responses such as stimulation of protein kinase C. This chain is Type-1 angiotensin II receptor (AGTR1), found in Canis lupus familiaris (Dog).